Here is a 133-residue protein sequence, read N- to C-terminus: MVKIRLKRTGRKKLPFYQIVAADSRAPRDGKFLEIVGHYQPTAKPHAVTIKKDRVSYWMQTGAQPTDTVRSLIRSTGLLHELRLRSLGRSEADITAEMEKWQQNQTERRQKRLAVKTRRRQAKKAAEAKGAEA.

The disordered stretch occupies residues 99–133 (EKWQQNQTERRQKRLAVKTRRRQAKKAAEAKGAEA). Over residues 109–123 (RQKRLAVKTRRRQAK) the composition is skewed to basic residues. Over residues 124–133 (KAAEAKGAEA) the composition is skewed to basic and acidic residues.

It belongs to the bacterial ribosomal protein bS16 family.

This is Small ribosomal subunit protein bS16 from Chlorobium limicola (strain DSM 245 / NBRC 103803 / 6330).